The sequence spans 122 residues: Glycine cleavage system H protein (122 aa).

In terms of domain architecture, Lipoyl-binding spans 19–101 (VATVGITDYA…QGKAWFFKIK (83 aa)). K60 bears the N6-lipoyllysine mark.

Belongs to the GcvH family. As to quaternary structure, the glycine cleavage system is composed of four proteins: P, T, L and H. It depends on (R)-lipoate as a cofactor.

In terms of biological role, the glycine cleavage system catalyzes the degradation of glycine. The H protein shuttles the methylamine group of glycine from the P protein to the T protein. In Bradyrhizobium diazoefficiens (strain JCM 10833 / BCRC 13528 / IAM 13628 / NBRC 14792 / USDA 110), this protein is Glycine cleavage system H protein.